Here is a 2568-residue protein sequence, read N- to C-terminus: MAPQNNGYPEPIAIVGMACRLPGEVTSPSKLWDLLVEERSAQSDVPSNRFNVDSWYHPDKTRPGSISTRGGYFLSEDDSYRQFDPFFFGINPKEAASMDPQQRKLLEVVYESFEAAGARLEDVSGSKTACYVGNFTWDIGQMQARDVNHGAPYHMTGGGLTILSNRVNYVFNLKGPSMTIDTACSSTMYALHLACRSLQAGDCSAAIVAGTNLIFGIEQQIGSVRLGVLSPTSACHTFDESADGYARAEAVGSLYLKTLSQAIADGDPIRAIVRGTSINANGKSPGISHPSAQDQEMVIRKAYASAGLDLDQTGYFECHGTGTPVGDPLEVSAIGNVFGNVRTAENPLLMGSVKTNLGHGEAASAISSLIKTILCLEKGEIPATIGIKRLNPDLNLRDGRLKIVQTRSPWPAAQHYLRASVNSFGYGGANAHAILDAVQSYLGDVYQSIPASLPAPEKSASKKYLLLPFSAHSEPTLERNIETISHSFKSGSFSLPDLAHTLGSRRSNHSVRAFGLVSGDADGPQLVDSLRPSKLTVGTAAGASPKLAFIFTGQGAQWAQMGYELVQEYAVVRQTLQDLGRTISKLPNAPDWDLLEALAQPKTKSRVNEAELSQPLTTAVQIAMVDLLRSWGVHPTAVAGHSSGEIAAAYTAGLISAAEAIIIAYQRGAATVKSTQQGAMLAVGQGPEEVLQVIQDIPGVGIACYNAPDSVTLSGTEKAIDEARGRFARAGVFNRKLITSGNAYHSELMTEAGTYYETFLKTCLLPNDPPSTGHASVTMFSSVTEEELSTIELDYWRKNLESPVRFDQATQKLLKQRPEVNVVVEIGPHSALAAPLKAIRTSVGYSPERLVYLSALKRNADSVESMLKLAGSLFLSGWPLDLSTVNADETVYQDETGAERIQYSHGSFIKDLPTYQWTYDEDFLWNESRLSTDIRFRSYPHHDLLGSRLPGTSNAAPAWRNLLSLDQVPWLRDHKVGEDIVFPAAGYVALAVEAVTQIRGSTVTTVDDAYTLRDVNITSAMVLKEGLSTELMFDLFAVTGQPATYQFSVTTVSQGTWTQHATGSVLIDSKNTNDQLLWPDDRNVGSRGGVNKDSYDRRWYAAMDKVGLIYGPGFKTLADIRASPEHLQATAEVSRTATDGLMGHQSEYMLHPTTIDACLQLSIIAAHHGKPESLNKVYLPVAIRKLTIRPQKDSGGVIPLAACGRGHHRGLRSVQTFIDLSSPSNRSLLQAEISFSSLETASSDTVTSKSPQPYTRLVWKPDFDRMSNAEANALFHGTQEDMSASRHFFSELEKVTRLAIRSSAERLPENLQTDHLPAHMHKFLAWLKTEGQALASSEGHDGLTGKDLMEEINSIARNVAHTVPEAAMVAQLNSRMPEIVSGTVGALDVMVEDDLMSKIYEDGFGQVGAYAKLSSVMELVAHKDPSLRILELGAGTGGATKPMLQALQGDTPLPKYAKYDFTDVSKAFLGVAQDKFEGYRNLDFGILDIEQDPAAQGFEEGSYDIVFASNVIHATRNVASSLSHCRRLLKPNGKLMIIETTKQRQVTGFMLGTLPGYWLGADDGRPSSPFLSKALWHQRLLDAGLSGADVVLDDYPEPADCTTLMVSRNVGDAVEHTSMNGTHGVNGVNGFHETNGQNGLNGANGVKSPLVTLIYRNTPQPFQQALEQKYAQLGISTRSMALLDVPTSLERDSRTVMLGELESPLMARMTPDEMHAIQRYTQLAATAIWVTNIDVLQGRDAEKSLVFGLAKSIMTEQPSFHLCSVDVDIYDGKTDYEHSSKLIVETEMAFHDDPNGDLDTELVEKDGLVYISRYVTDDAENANFERHLAIKPTMSSFSESDSSNYSLEFEKVGRLDSFYFKEHSLKALGEHEVLLDIEAAPLDELSIPTLKGQASSSCFGLVMAGTVRAVGPKASKLKKGDRVCCLHPHHFDTAVIVDERVCELLSAHERSEDLISQIHPVVVSLHIVETLLRLRTGDRVLIDCRQAYLAYAIAQVALLAGSTVQVTFNSEPGRGFLQNLGDNAHLVDRRAGFNDSLVGSSFDAIITDAKEGYQLFCESLTYGGRITVLANGAPGDMASAAVSFLNKGTTVGMFDPIDGFANVPLQHSSLVTKALDLLRHNTIRPLPSTQYDLSSFTDAVGHISQEDSVGLAVLTRTSNTAVPIHTVTQPLEFNSQASYLLIGCLGGLGRSLTTWMVSRGARHFVFLSRSGADKPEAAALVQELGELTRTRYYDLTVQVVRGDVSSKEDVSRAIACAKQPIKGVVQAAMVLKDTLFTEMTLGQFNQVLHPKMLGTIHLHELLQDHDLDFFVMTSSVLGAIGAAMQSNYSAANAFLDHMARYRQSQGQQATSIALGMILDVGHVEEHPEVEKALKRNGMYGISVDEYLLMMEFACRRRDLSASARKEGPFKYDPCASAHIVTGMDPTRVSRAGGKSLWLKDNRLRNLVAALGGGSEGEDALNAKQSAGTSTRELLDAARAEGGEAAVKSAILGLILARFSKLVLLPVAKIDPGKSLAHYGMDSMISAELKSWAWREFTVDLPFLGLLDQGLTFDGLADQVVSLAETRSS.

Positions 9–437 constitute a Ketosynthase family 3 (KS3) domain; sequence PEPIAIVGMA…GANAHAILDA (429 aa). Residues Cys-184, His-319, and His-359 each act as for beta-ketoacyl synthase activity in the active site. The Malonyl-CoA:ACP transacylase (MAT) domain maps to 549-877; that stretch reads FIFTGQGAQW…KLAGSLFLSG (329 aa). The tract at residues 942–1081 is N-terminal hotdog fold; sequence HDLLGSRLPG…TNDQLLWPDD (140 aa). Residues 942–1244 form the PKS/mFAS DH domain; the sequence is HDLLGSRLPG…FSSLETASSD (303 aa). Catalysis depends on His-974, which acts as the Proton acceptor; for dehydratase activity. Residues 1091 to 1244 form a C-terminal hotdog fold region; it reads NKDSYDRRWY…FSSLETASSD (154 aa). Asp-1156 acts as the Proton donor; for dehydratase activity in catalysis. Residues 1295–1595 form a methyltransferase (CMet) domain region; sequence VTRLAIRSSA…SGADVVLDDY (301 aa). The 302-residue stretch at 1853–2154 folds into the Enoyl reductase (ER) domain; the sequence is GRLDSFYFKE…QEDSVGLAVL (302 aa). A Ketoreductase (KR) domain is found at 2177–2357; sequence ASYLLIGCLG…QATSIALGMI (181 aa). The region spanning 2485-2563 is the Carrier domain; that stretch reads AVKSAILGLI…GLADQVVSLA (79 aa). At Ser-2522 the chain carries O-(pantetheine 4'-phosphoryl)serine.

It depends on pantetheine 4'-phosphate as a cofactor.

The protein operates within antifungal biosynthesis. Highly reducing polyketide synthase; part of the gene cluster that mediates the biosynthesis of the tetrahydropyranyl antifungal agent restricticin that acts as an inhibitor of CYP51 and blocks the ergosterol biosynthesis. The highly reducing polyketide synthase resH, the short chain dehydrogenase resG, the cyclase resF, the FAD-dependent monooxygenase resA and the enoylreductase resD are required to generate the first stable intermediate desmethylrestrictinol. ResH with resD biosynthesize the first polyketide chain intermediate that is reduced by resG, followed by epoxidation by resA before 6-endo cyclization via epoxide opening by resF leads to desmethylrestrictinol. The methyltransferase resE then catalyzes the C4 O-methylation of desmethylrestrictinol to produce restrictinol, and the nonribosomal peptide synthetase resC catalyzes the C3 esterification of restrictinol with glycine that leads to restricticin. The sequence is that of Highly reducing polyketide synthase resH from Aspergillus sclerotiorum.